The primary structure comprises 253 residues: Protein C1orf43 (253 aa).

A helical membrane pass occupies residues 11 to 31 (VNVVLVMAYGSLVFVLLFIFV).

It localises to the membrane. Its subcellular location is the golgi apparatus. The protein resides in the mitochondrion. General regulator of phagocytosis. Required to uptake Gram negative bacterium by macrophages. This Homo sapiens (Human) protein is Protein C1orf43 (C1orf43).